Consider the following 440-residue polypeptide: Chromosome partition protein MukF (440 aa).

A leucine-zipper region spans residues 208–236 (LSETSGTLRELQDTLEAAGDKLQANLLRI).

The protein belongs to the MukF family. In terms of assembly, interacts, and probably forms a ternary complex, with MukE and MukB via its C-terminal region. The complex formation is stimulated by calcium or magnesium. It is required for an interaction between MukE and MukB.

The protein localises to the cytoplasm. It localises to the nucleoid. Its function is as follows. Involved in chromosome condensation, segregation and cell cycle progression. May participate in facilitating chromosome segregation by condensation DNA from both sides of a centrally located replisome during cell division. Not required for mini-F plasmid partitioning. Probably acts via its interaction with MukB and MukE. Overexpression results in anucleate cells. It has a calcium binding activity. The sequence is that of Chromosome partition protein MukF from Yersinia pestis.